A 186-amino-acid chain; its full sequence is UPF0200 protein Mbar_A0975 (186 aa).

8–15 contacts ATP; it reads GMPASGKS.

The protein belongs to the UPF0200 family.

The sequence is that of UPF0200 protein Mbar_A0975 from Methanosarcina barkeri (strain Fusaro / DSM 804).